The chain runs to 1102 residues: Carbamoyl phosphate synthase large chain (1102 aa).

The interval 1 to 402 (MPKRTDLKSV…ALQKALRSLE (402 aa)) is carboxyphosphate synthetic domain. Positions 129, 169, 175, 176, 208, 210, 215, 241, 242, 243, 285, and 299 each coordinate ATP. The region spanning 133–328 (KGVVERCGAE…IAKIATKLSL (196 aa)) is the ATP-grasp 1 domain. Glutamine 285, glutamate 299, and asparagine 301 together coordinate Mg(2+). Mn(2+) contacts are provided by glutamine 285, glutamate 299, and asparagine 301. The interval 403–546 (QKGSQLDFSS…YHYSSYDEED (144 aa)) is oligomerization domain. The carbamoyl phosphate synthetic domain stretch occupies residues 547 to 950 (EVGLHAKPSV…AFAKSQAAAN (404 aa)). The ATP-grasp 2 domain occupies 677 to 868 (ARVLDEAGLT…MAKAAALIGT (192 aa)). Positions 713, 752, 754, 759, 784, 785, 786, 787, 827, and 839 each coordinate ATP. Mg(2+)-binding residues include glutamine 827, glutamate 839, and asparagine 841. The Mn(2+) site is built by glutamine 827, glutamate 839, and asparagine 841. In terms of domain architecture, MGS-like spans 951–1096 (NALPTEGKIF…QEHAANLSAA (146 aa)). Residues 951-1102 (NALPTEGKIF…LSAAMEAANA (152 aa)) are allosteric domain.

Belongs to the CarB family. Composed of two chains; the small (or glutamine) chain promotes the hydrolysis of glutamine to ammonia, which is used by the large (or ammonia) chain to synthesize carbamoyl phosphate. Tetramer of heterodimers (alpha,beta)4. Mg(2+) serves as cofactor. It depends on Mn(2+) as a cofactor.

The catalysed reaction is hydrogencarbonate + L-glutamine + 2 ATP + H2O = carbamoyl phosphate + L-glutamate + 2 ADP + phosphate + 2 H(+). It catalyses the reaction hydrogencarbonate + NH4(+) + 2 ATP = carbamoyl phosphate + 2 ADP + phosphate + 2 H(+). Its pathway is amino-acid biosynthesis; L-arginine biosynthesis; carbamoyl phosphate from bicarbonate: step 1/1. It functions in the pathway pyrimidine metabolism; UMP biosynthesis via de novo pathway; (S)-dihydroorotate from bicarbonate: step 1/3. Functionally, large subunit of the glutamine-dependent carbamoyl phosphate synthetase (CPSase). CPSase catalyzes the formation of carbamoyl phosphate from the ammonia moiety of glutamine, carbonate, and phosphate donated by ATP, constituting the first step of 2 biosynthetic pathways, one leading to arginine and/or urea and the other to pyrimidine nucleotides. The large subunit (synthetase) binds the substrates ammonia (free or transferred from glutamine from the small subunit), hydrogencarbonate and ATP and carries out an ATP-coupled ligase reaction, activating hydrogencarbonate by forming carboxy phosphate which reacts with ammonia to form carbamoyl phosphate. The polypeptide is Carbamoyl phosphate synthase large chain (Paenarthrobacter aurescens (strain TC1)).